The primary structure comprises 314 residues: Tetraacyldisaccharide 4'-kinase (314 aa).

Position 54-61 (54-61 (YIGGTGKT)) interacts with ATP.

The protein belongs to the LpxK family.

The enzyme catalyses a lipid A disaccharide + ATP = a lipid IVA + ADP + H(+). The protein operates within glycolipid biosynthesis; lipid IV(A) biosynthesis; lipid IV(A) from (3R)-3-hydroxytetradecanoyl-[acyl-carrier-protein] and UDP-N-acetyl-alpha-D-glucosamine: step 6/6. Its function is as follows. Transfers the gamma-phosphate of ATP to the 4'-position of a tetraacyldisaccharide 1-phosphate intermediate (termed DS-1-P) to form tetraacyldisaccharide 1,4'-bis-phosphate (lipid IVA). The sequence is that of Tetraacyldisaccharide 4'-kinase from Pelagibacter ubique (strain HTCC1062).